A 207-amino-acid polypeptide reads, in one-letter code: Outer-membrane lipoprotein carrier protein (207 aa).

Residues 1 to 21 (MRAIRMLLVSALAMGAVSAHA) form the signal peptide.

This sequence belongs to the LolA family. In terms of assembly, monomer.

It is found in the periplasm. In terms of biological role, participates in the translocation of lipoproteins from the inner membrane to the outer membrane. Only forms a complex with a lipoprotein if the residue after the N-terminal Cys is not an aspartate (The Asp acts as a targeting signal to indicate that the lipoprotein should stay in the inner membrane). In Pseudomonas entomophila (strain L48), this protein is Outer-membrane lipoprotein carrier protein.